The sequence spans 201 residues: Glutathione S-transferase (201 aa).

The region spanning 1–81 (MKLYYKVGAC…YIGDHSDVAA (81 aa)) is the GST N-terminal domain. Residues cysteine 10, lysine 35, valine 52, 65 to 66 (QN), and 102 to 105 (SDLH) each bind glutathione. The region spanning 87–201 (GSIERARLQE…QKAFKEEGLN (115 aa)) is the GST C-terminal domain.

This sequence belongs to the GST superfamily. Beta family. In terms of assembly, homodimer.

The protein localises to the cytoplasm. It catalyses the reaction RX + glutathione = an S-substituted glutathione + a halide anion + H(+). Functionally, conjugation of reduced glutathione to a wide number of exogenous and endogenous hydrophobic electrophiles. The sequence is that of Glutathione S-transferase (gst) from Brucella anthropi (Ochrobactrum anthropi).